A 698-amino-acid chain; its full sequence is Putative transposon gamma-delta 80.3 kDa protein (698 aa).

This is Putative transposon gamma-delta 80.3 kDa protein (tnpX) from Escherichia coli (strain K12).